The primary structure comprises 208 residues: Phosphoheptose isomerase (208 aa).

An SIS domain is found at Met38–Pro200. Asn53–Gly55 serves as a coordination point for substrate. Zn(2+) is bound by residues His62 and Glu66. Residues Glu66, Asn95–Asp96, Ser121–Ser123, Ser126, and Gln173 each bind substrate. The Zn(2+) site is built by Gln173 and His181.

It belongs to the SIS family. GmhA subfamily. As to quaternary structure, homotetramer. Zn(2+) serves as cofactor.

The protein resides in the cytoplasm. It carries out the reaction 2 D-sedoheptulose 7-phosphate = D-glycero-alpha-D-manno-heptose 7-phosphate + D-glycero-beta-D-manno-heptose 7-phosphate. The protein operates within carbohydrate biosynthesis; D-glycero-D-manno-heptose 7-phosphate biosynthesis; D-glycero-alpha-D-manno-heptose 7-phosphate and D-glycero-beta-D-manno-heptose 7-phosphate from sedoheptulose 7-phosphate: step 1/1. Catalyzes the isomerization of sedoheptulose 7-phosphate in D-glycero-D-manno-heptose 7-phosphate. This Nitratidesulfovibrio vulgaris (strain ATCC 29579 / DSM 644 / CCUG 34227 / NCIMB 8303 / VKM B-1760 / Hildenborough) (Desulfovibrio vulgaris) protein is Phosphoheptose isomerase.